We begin with the raw amino-acid sequence, 330 residues long: Ketol-acid reductoisomerase (NADP(+)) (330 aa).

One can recognise a KARI N-terminal Rossmann domain in the interval 1–182 (MAVVYYDQDA…GATRAGVIET (182 aa)). Residues 25–28 (YGSQ), Arg-48, Ser-51, Ser-53, and 83–86 (DETQ) contribute to the NADP(+) site. Residue His-108 is part of the active site. Residue Gly-134 participates in NADP(+) binding. Residues 183–328 (TFKEETETDL…DQLREMMSWL (146 aa)) enclose the KARI C-terminal knotted domain. Asp-191, Glu-195, Glu-227, and Glu-231 together coordinate Mg(2+). Residue Ser-252 participates in substrate binding.

It belongs to the ketol-acid reductoisomerase family. The cofactor is Mg(2+).

The enzyme catalyses (2R)-2,3-dihydroxy-3-methylbutanoate + NADP(+) = (2S)-2-acetolactate + NADPH + H(+). It catalyses the reaction (2R,3R)-2,3-dihydroxy-3-methylpentanoate + NADP(+) = (S)-2-ethyl-2-hydroxy-3-oxobutanoate + NADPH + H(+). The protein operates within amino-acid biosynthesis; L-isoleucine biosynthesis; L-isoleucine from 2-oxobutanoate: step 2/4. It participates in amino-acid biosynthesis; L-valine biosynthesis; L-valine from pyruvate: step 2/4. In terms of biological role, involved in the biosynthesis of branched-chain amino acids (BCAA). Catalyzes an alkyl-migration followed by a ketol-acid reduction of (S)-2-acetolactate (S2AL) to yield (R)-2,3-dihydroxy-isovalerate. In the isomerase reaction, S2AL is rearranged via a Mg-dependent methyl migration to produce 3-hydroxy-3-methyl-2-ketobutyrate (HMKB). In the reductase reaction, this 2-ketoacid undergoes a metal-dependent reduction by NADPH to yield (R)-2,3-dihydroxy-isovalerate. This Moorella thermoacetica (strain ATCC 39073 / JCM 9320) protein is Ketol-acid reductoisomerase (NADP(+)).